Reading from the N-terminus, the 96-residue chain is Probable quinol oxidase subunit 4 (96 aa).

3 helical membrane passes run 8 to 28 (TVGFIASIVLTILAVFVTLYT), 36 to 56 (ITIIFGFAFIQAAVQLLMFMH), and 68 to 88 (FKVLFAIIITLITVIGTYWVM).

This sequence belongs to the cytochrome c oxidase bacterial subunit 4 family.

The protein localises to the cell membrane. The catalysed reaction is 2 a quinol + O2 = 2 a quinone + 2 H2O. Catalyzes quinol oxidation with the concomitant reduction of oxygen to water. In Staphylococcus saprophyticus subsp. saprophyticus (strain ATCC 15305 / DSM 20229 / NCIMB 8711 / NCTC 7292 / S-41), this protein is Probable quinol oxidase subunit 4 (qoxD).